A 294-amino-acid polypeptide reads, in one-letter code: 4-hydroxy-tetrahydrodipicolinate synthase (294 aa).

Thr-47 is a pyruvate binding site. Catalysis depends on Tyr-135, which acts as the Proton donor/acceptor. Lys-163 acts as the Schiff-base intermediate with substrate in catalysis. Residue Ile-205 participates in pyruvate binding.

The protein belongs to the DapA family. In terms of assembly, homotetramer; dimer of dimers.

It localises to the cytoplasm. It carries out the reaction L-aspartate 4-semialdehyde + pyruvate = (2S,4S)-4-hydroxy-2,3,4,5-tetrahydrodipicolinate + H2O + H(+). Its pathway is amino-acid biosynthesis; L-lysine biosynthesis via DAP pathway; (S)-tetrahydrodipicolinate from L-aspartate: step 3/4. Functionally, catalyzes the condensation of (S)-aspartate-beta-semialdehyde [(S)-ASA] and pyruvate to 4-hydroxy-tetrahydrodipicolinate (HTPA). This chain is 4-hydroxy-tetrahydrodipicolinate synthase, found in Rickettsia prowazekii (strain Madrid E).